A 387-amino-acid polypeptide reads, in one-letter code: Exodeoxyribonuclease 7 large subunit (387 aa).

This sequence belongs to the XseA family. Heterooligomer composed of large and small subunits.

It localises to the cytoplasm. The enzyme catalyses Exonucleolytic cleavage in either 5'- to 3'- or 3'- to 5'-direction to yield nucleoside 5'-phosphates.. Bidirectionally degrades single-stranded DNA into large acid-insoluble oligonucleotides, which are then degraded further into small acid-soluble oligonucleotides. The polypeptide is Exodeoxyribonuclease 7 large subunit (Synechococcus sp. (strain CC9902)).